The sequence spans 239 residues: MIINAKGPASFAEKYIVRSIWDNKFPPGSILPAERELSELIGVTRTTLREVLQRLARDGWLKIQHGKPTQVNNFWETSGLNILETIADLNPEGFPVLVDQLLSARTNVSAIYFRGALRNNPDQAVDVLAGIHQLENTAEAFAEFDYQLHHRLAFSSGNPLYVLILNGFKGLYSRVGRYYFSSSDARALALNFYVELEKLALAKNYIDVPAVMRSYGINSGKMWQRLRDDMPADIAQDKS.

Residues 6-74 form the HTH gntR-type domain; it reads KGPASFAEKY…HGKPTQVNNF (69 aa). The segment at residues 34–53 is a DNA-binding region (H-T-H motif); sequence ERELSELIGVTRTTLREVLQ.

In terms of assembly, homodimer.

The protein localises to the cytoplasm. Functionally, multifunctional regulator of fatty acid metabolism. This is Fatty acid metabolism regulator protein from Shewanella denitrificans (strain OS217 / ATCC BAA-1090 / DSM 15013).